The following is a 94-amino-acid chain: Large ribosomal subunit protein uL23 (94 aa).

It belongs to the universal ribosomal protein uL23 family. Part of the 50S ribosomal subunit. Contacts protein L29, and trigger factor when it is bound to the ribosome.

Its function is as follows. One of the early assembly proteins it binds 23S rRNA. One of the proteins that surrounds the polypeptide exit tunnel on the outside of the ribosome. Forms the main docking site for trigger factor binding to the ribosome. This is Large ribosomal subunit protein uL23 from Ligilactobacillus salivarius (strain UCC118) (Lactobacillus salivarius).